Consider the following 279-residue polypeptide: Prephenate dehydratase (279 aa).

Positions K2 to K178 constitute a Prephenate dehydratase domain. The 77-residue stretch at L194–N270 folds into the ACT domain.

It catalyses the reaction prephenate + H(+) = 3-phenylpyruvate + CO2 + H2O. It functions in the pathway amino-acid biosynthesis; L-phenylalanine biosynthesis; phenylpyruvate from prephenate: step 1/1. In Lactococcus lactis subsp. lactis (strain IL1403) (Streptococcus lactis), this protein is Prephenate dehydratase (pheA).